Consider the following 140-residue polypeptide: Large ribosomal subunit protein bL17 (140 aa).

This sequence belongs to the bacterial ribosomal protein bL17 family. Part of the 50S ribosomal subunit. Contacts protein L32.

The protein is Large ribosomal subunit protein bL17 of Paracoccus denitrificans (strain Pd 1222).